Reading from the N-terminus, the 410-residue chain is Putative odorant receptor 65c (410 aa).

The Cytoplasmic segment spans residues Met1 to Ser59. Residues Trp60 to Thr80 traverse the membrane as a helical segment. Residues Glu81 to Asp92 are Extracellular-facing. A helical transmembrane segment spans residues Ile93–Gly113. The Cytoplasmic portion of the chain corresponds to Asp114–Thr148. The chain crosses the membrane as a helical span at residues Leu149 to Ile169. Residues Thr170–Glu222 are Extracellular-facing. The chain crosses the membrane as a helical span at residues Gly223–Leu243. The Cytoplasmic segment spans residues Arg244–Lys279. The chain crosses the membrane as a helical span at residues Val280–Val300. Residues Leu301–Val312 lie on the Extracellular side of the membrane. A helical transmembrane segment spans residues Val313–Phe333. At Gly334–Ser385 the chain is on the cytoplasmic side. A helical transmembrane segment spans residues Phe386–Leu406. The Extracellular portion of the chain corresponds to Lys407–Asp410.

It belongs to the insect chemoreceptor superfamily. Heteromeric odorant receptor channel (TC 1.A.69) family. Or49a subfamily. Interacts with Orco. Complexes exist early in the endomembrane system in olfactory sensory neurons (OSNs), coupling these complexes to the conserved ciliary trafficking pathway.

It is found in the cell membrane. Its function is as follows. Odorant receptor which mediates acceptance or avoidance behavior, depending on its substrates. The odorant receptor repertoire encodes a large collection of odor stimuli that vary widely in identity, intensity, and duration. May form a complex with Orco to form odorant-sensing units, providing sensitive and prolonged odorant signaling and calcium permeability. In Drosophila melanogaster (Fruit fly), this protein is Putative odorant receptor 65c (Or65c).